Reading from the N-terminus, the 236-residue chain is Cyclin-P3-1 (236 aa).

This sequence belongs to the cyclin family. Cyclin U/P subfamily.

The sequence is that of Cyclin-P3-1 (CYCP3-1) from Oryza sativa subsp. japonica (Rice).